Consider the following 472-residue polypeptide: Chromosomal replication initiator protein DnaA (472 aa).

Positions 1–73 (MSNMEHDRWS…LTCWQAELPE (73 aa)) are domain I, interacts with DnaA modulators. The interval 73–128 (EVCRIDLTVRSPMRAAVAKEAAAPVEHRRAEHRPATETRSHATVPASSNHDALGGS) is domain II. The disordered stretch occupies residues 92–127 (EAAAPVEHRRAEHRPATETRSHATVPASSNHDALGG). The span at 97 to 112 (VEHRRAEHRPATETRS) shows a compositional bias: basic and acidic residues. The interval 129-351 (PLDPRLTFAS…GAINRLLAHS (223 aa)) is domain III, AAA+ region. Positions 176, 178, 179, and 180 each coordinate ATP. Residues 352–472 (KLNAQPVTLE…VDSLKRQLQE (121 aa)) form a domain IV, binds dsDNA region.

It belongs to the DnaA family. Oligomerizes as a right-handed, spiral filament on DNA at oriC.

The protein localises to the cytoplasm. Plays an essential role in the initiation and regulation of chromosomal replication. ATP-DnaA binds to the origin of replication (oriC) to initiate formation of the DNA replication initiation complex once per cell cycle. Binds the DnaA box (a 9 base pair repeat at the origin) and separates the double-stranded (ds)DNA. Forms a right-handed helical filament on oriC DNA; dsDNA binds to the exterior of the filament while single-stranded (ss)DNA is stabiized in the filament's interior. The ATP-DnaA-oriC complex binds and stabilizes one strand of the AT-rich DNA unwinding element (DUE), permitting loading of DNA polymerase. After initiation quickly degrades to an ADP-DnaA complex that is not apt for DNA replication. Binds acidic phospholipids. The chain is Chromosomal replication initiator protein DnaA from Rhodopseudomonas palustris (strain HaA2).